Here is a 562-residue protein sequence, read N- to C-terminus: Gut esterase 1 (562 aa).

A signal peptide spans 1–16 (MRVLLASLLIFGACWA). A disulfide bridge connects residues Cys75 and Cys93. The active-site Acyl-ester intermediate is Ser199. Cys251 and Cys259 are disulfide-bonded. Residues Glu320 and His451 each act as charge relay system in the active site. Residues 559-562 (KDEL) carry the Prevents secretion from ER motif.

The protein belongs to the type-B carboxylesterase/lipase family. Expressed only in the intestine.

Its subcellular location is the endoplasmic reticulum lumen. It catalyses the reaction a carboxylic ester + H2O = an alcohol + a carboxylate + H(+). This chain is Gut esterase 1 (ges-1), found in Caenorhabditis briggsae.